Consider the following 103-residue polypeptide: uncharacterized protein (103 aa).

A CHCH domain is found at 10–63; the sequence is FPECDHLKQIYDKCFTEFFQKFITPNYRHQYAVNPCERLHDVYKRCVEERLATQ. Short sequence motifs (cx9C motif) lie at residues 13-23 and 45-55; these read CDHLKQIYDKC and CERLHDVYKRC. 2 disulfide bridges follow: C13-C55 and C23-C45. The span at 80–90 shows a compositional bias: basic and acidic residues; sequence TDDDKLKDRQN. The segment at 80–103 is disordered; it reads TDDDKLKDRQNNQKTNSENKCSSS. Residues 91–103 show a composition bias toward polar residues; it reads NQKTNSENKCSSS.

Belongs to the TRIAP1/MDM35 family.

This is an uncharacterized protein from Caenorhabditis elegans.